The chain runs to 625 residues: Complex I assembly factor ACAD9, mitochondrial (625 aa).

Residues 1-41 constitute a mitochondrion transit peptide; that stretch reads MSGYVLFSRGATAAAAAARASRVLRVFTERRRTLHTSLQSC. An N6-acetyllysine modification is found at Lys45. Lys96 carries the post-translational modification N6-succinyllysine. Catalysis depends on Glu430, which acts as the Proton acceptor. Phosphothreonine is present on Thr482. At Lys525 the chain carries N6-acetyllysine; alternate. Lys525 is modified (N6-succinyllysine; alternate).

It belongs to the acyl-CoA dehydrogenase family. As to quaternary structure, homodimer. Interacts with NDUFAF1 and ECSIT. Part of the mitochondrial complex I assembly/MCIA complex that comprises at least the core subunits TMEM126B, NDUFAF1, ECSIT and ACAD9 and complement subunits such as COA1 and TMEM186. Interacts with TMEM70 and TMEM242. FAD is required as a cofactor.

Its subcellular location is the mitochondrion inner membrane. It catalyses the reaction eicosanoyl-CoA + oxidized [electron-transfer flavoprotein] + H(+) = (2E)-eicosenoyl-CoA + reduced [electron-transfer flavoprotein]. It carries out the reaction octadecanoyl-CoA + oxidized [electron-transfer flavoprotein] + H(+) = (2E)-octadecenoyl-CoA + reduced [electron-transfer flavoprotein]. The enzyme catalyses oxidized [electron-transfer flavoprotein] + hexadecanoyl-CoA + H(+) = (2E)-hexadecenoyl-CoA + reduced [electron-transfer flavoprotein]. The catalysed reaction is decanoyl-CoA + oxidized [electron-transfer flavoprotein] + H(+) = (2E)-decenoyl-CoA + reduced [electron-transfer flavoprotein]. It catalyses the reaction nonanoyl-CoA + oxidized [electron-transfer flavoprotein] + H(+) = (2E)-nonenoyl-CoA + reduced [electron-transfer flavoprotein]. It carries out the reaction pentadecanoyl-CoA + oxidized [electron-transfer flavoprotein] + H(+) = (2E)-pentadecenoyl-CoA + reduced [electron-transfer flavoprotein]. The enzyme catalyses undecanoyl-CoA + oxidized [electron-transfer flavoprotein] + H(+) = trans-2-undecenoyl-CoA + reduced [electron-transfer flavoprotein]. The catalysed reaction is (9Z)-hexadecenoyl-CoA + oxidized [electron-transfer flavoprotein] + H(+) = (2E,9Z)-hexadecadienoyl-CoA + reduced [electron-transfer flavoprotein]. It catalyses the reaction heptadecanoyl-CoA + oxidized [electron-transfer flavoprotein] + H(+) = trans-2-heptadecenoyl-CoA + reduced [electron-transfer flavoprotein]. It carries out the reaction (9E)-octadecenoyl-CoA + oxidized [electron-transfer flavoprotein] + H(+) = (2E,9E)-octadecadienoyl-CoA + reduced [electron-transfer flavoprotein]. The enzyme catalyses oxidized [electron-transfer flavoprotein] + (9Z)-octadecenoyl-CoA + H(+) = (2E,9Z)-octadecadienoyl-CoA + reduced [electron-transfer flavoprotein]. The catalysed reaction is (9Z,12Z)-octadecadienoyl-CoA + oxidized [electron-transfer flavoprotein] + H(+) = (2E,9Z,12Z)-octadecatrienoyl-CoA + reduced [electron-transfer flavoprotein]. It catalyses the reaction (4Z,7Z,10Z,13Z,16Z,19Z)-docosahexaenoyl-CoA + oxidized [electron-transfer flavoprotein] + H(+) = (2E,4Z,7Z,10Z,13Z,16Z,19Z)-docosaheptaenoyl-CoA + reduced [electron-transfer flavoprotein]. It carries out the reaction tetradecanoyl-CoA + oxidized [electron-transfer flavoprotein] + H(+) = (2E)-tetradecenoyl-CoA + reduced [electron-transfer flavoprotein]. Functionally, as part of the MCIA complex, primarily participates in the assembly of the mitochondrial complex I and therefore plays a role in oxidative phosphorylation. This moonlighting protein also has a dehydrogenase activity toward a broad range of substrates with greater specificity for long-chain unsaturated acyl-CoAs. However, in vivo, it does not seem to play a primary role in fatty acid oxidation. In addition, the function in complex I assembly is independent of the dehydrogenase activity of the protein. In Rattus norvegicus (Rat), this protein is Complex I assembly factor ACAD9, mitochondrial.